Reading from the N-terminus, the 212-residue chain is Octanoyltransferase (212 aa).

Positions 34–208 constitute a BPL/LPL catalytic domain; sequence GQRQDTLILL…AFERQFNARC (175 aa). Residues 72-79, 139-141, and 152-154 contribute to the substrate site; these read RGGQVTYH, SIG, and GLS. Residue Cys170 is the Acyl-thioester intermediate of the active site.

This sequence belongs to the LipB family.

The protein resides in the cytoplasm. The enzyme catalyses octanoyl-[ACP] + L-lysyl-[protein] = N(6)-octanoyl-L-lysyl-[protein] + holo-[ACP] + H(+). The protein operates within protein modification; protein lipoylation via endogenous pathway; protein N(6)-(lipoyl)lysine from octanoyl-[acyl-carrier-protein]: step 1/2. Functionally, catalyzes the transfer of endogenously produced octanoic acid from octanoyl-acyl-carrier-protein onto the lipoyl domains of lipoate-dependent enzymes. Lipoyl-ACP can also act as a substrate although octanoyl-ACP is likely to be the physiological substrate. The sequence is that of Octanoyltransferase from Magnetococcus marinus (strain ATCC BAA-1437 / JCM 17883 / MC-1).